Here is a 145-residue protein sequence, read N- to C-terminus: MKKILVINGPNLNLLGIREKDIYGSTNYNKLLEIISKKANELNLNTLFFQSNHEGEIIDRIHKALDENIDGIIINPGAYTHYSYAIHDAIKAVNIPTIEVHISNIYAREEFRKRSVIAPACVGQISGFGIKSYIIALYALKEILG.

Residue tyrosine 23 is the Proton acceptor of the active site. 3 residues coordinate substrate: asparagine 75, histidine 81, and aspartate 88. The active-site Proton donor is the histidine 101. Substrate-binding positions include 102–103 (IS) and arginine 112.

Belongs to the type-II 3-dehydroquinase family. Homododecamer.

The enzyme catalyses 3-dehydroquinate = 3-dehydroshikimate + H2O. The protein operates within metabolic intermediate biosynthesis; chorismate biosynthesis; chorismate from D-erythrose 4-phosphate and phosphoenolpyruvate: step 3/7. Catalyzes a trans-dehydration via an enolate intermediate. This Caldicellulosiruptor saccharolyticus (strain ATCC 43494 / DSM 8903 / Tp8T 6331) protein is 3-dehydroquinate dehydratase.